The chain runs to 1976 residues: Protein TIC 214 (1976 aa).

Helical transmembrane passes span 11–31 (LLLL…YYGF), 64–84 (FIMG…HLAL), 87–107 (PHTL…FFWN), 126–146 (LSIQ…HFVL), 173–193 (FFGW…VLSW), and 221–241 (IFSI…PSPI). The span at 619–635 (FEEEEEEEEEDDQEEST) shows a compositional bias: acidic residues. Disordered regions lie at residues 619 to 642 (FEEE…GIRS) and 830 to 861 (SSYV…EDKR). Residues 836–861 (GAKEKEKIEEEHEEEKGEYKRKEDKR) are compositionally biased toward basic and acidic residues. Transmembrane regions (helical) follow at residues 1054–1074 (IIKI…FFVL) and 1202–1222 (IYMS…QFFL). A compositionally biased stretch (basic and acidic residues) spans 1633–1665 (QKERFHPKPKVESNQKGYLELENRNRDEKERQH). Residues 1633–1669 (QKERFHPKPKVESNQKGYLELENRNRDEKERQHQGNL) form a disordered region.

Belongs to the TIC214 family. As to quaternary structure, part of the Tic complex.

It localises to the plastid. Its subcellular location is the chloroplast inner membrane. Involved in protein precursor import into chloroplasts. May be part of an intermediate translocation complex acting as a protein-conducting channel at the inner envelope. The polypeptide is Protein TIC 214 (Nymphaea alba (White water-lily)).